A 617-amino-acid chain; its full sequence is Proline--tRNA ligase (617 aa).

The protein belongs to the class-II aminoacyl-tRNA synthetase family. ProS type 1 subfamily. As to quaternary structure, homodimer.

The protein localises to the cytoplasm. It catalyses the reaction tRNA(Pro) + L-proline + ATP = L-prolyl-tRNA(Pro) + AMP + diphosphate. Functionally, catalyzes the attachment of proline to tRNA(Pro) in a two-step reaction: proline is first activated by ATP to form Pro-AMP and then transferred to the acceptor end of tRNA(Pro). As ProRS can inadvertently accommodate and process non-cognate amino acids such as alanine and cysteine, to avoid such errors it has two additional distinct editing activities against alanine. One activity is designated as 'pretransfer' editing and involves the tRNA(Pro)-independent hydrolysis of activated Ala-AMP. The other activity is designated 'posttransfer' editing and involves deacylation of mischarged Ala-tRNA(Pro). The misacylated Cys-tRNA(Pro) is not edited by ProRS. The polypeptide is Proline--tRNA ligase (Treponema pallidum (strain Nichols)).